The following is a 205-amino-acid chain: Anaerobic dimethyl sulfoxide reductase chain B (205 aa).

3 consecutive 4Fe-4S ferredoxin-type domains span residues 5–33, 59–89, and 90–119; these read YGFF…LTPE, FAYY…KRED, and GFVV…YNET. [4Fe-4S] cluster contacts are provided by cysteine 14, cysteine 17, cysteine 20, cysteine 24, cysteine 67, cysteine 70, cysteine 75, cysteine 79, cysteine 99, cysteine 102, cysteine 105, cysteine 109, cysteine 126, cysteine 129, cysteine 141, and cysteine 145. The segment at 184 to 205 is disordered; it reads KPNANSRPTGDTTGYLANPKEV. Positions 186 to 195 are enriched in polar residues; the sequence is NANSRPTGDT.

Heterotrimeric enzyme composed of a catalytic heterodimer (DmsAB) and a membrane anchor protein (DmsC). Requires [4Fe-4S] cluster as cofactor.

Electron transfer subunit of the terminal reductase during anaerobic growth on various sulfoxide and N-oxide compounds. In Escherichia coli (strain K12), this protein is Anaerobic dimethyl sulfoxide reductase chain B (dmsB).